The chain runs to 61 residues: Ferredoxin (61 aa).

The 4Fe-4S ferredoxin-type domain maps to 2 to 28 (LYITEECTYCGACEPECPTNAISAGSE). Positions 8, 11, 14, 18, 37, 40, 49, and 53 each coordinate [4Fe-4S] cluster.

The cofactor is [4Fe-4S] cluster.

Its function is as follows. Ferredoxins are iron-sulfur proteins that transfer electrons in a wide variety of metabolic reactions. In Chlorobaculum thiosulfatiphilum (Chlorobium limicola f.sp. thiosulfatophilum), this protein is Ferredoxin.